We begin with the raw amino-acid sequence, 528 residues long: Lanosterol 14-alpha demethylase (528 aa).

Cys470 is a binding site for heme.

This sequence belongs to the cytochrome P450 family. Heme serves as cofactor.

Its subcellular location is the membrane. The enzyme catalyses a 14alpha-methyl steroid + 3 reduced [NADPH--hemoprotein reductase] + 3 O2 = a Delta(14) steroid + formate + 3 oxidized [NADPH--hemoprotein reductase] + 4 H2O + 4 H(+). It carries out the reaction a 14alpha-methyl steroid + reduced [NADPH--hemoprotein reductase] + O2 = a 14alpha-hydroxymethyl steroid + oxidized [NADPH--hemoprotein reductase] + H2O + H(+). It catalyses the reaction a 14alpha-hydroxymethyl steroid + reduced [NADPH--hemoprotein reductase] + O2 = a 14alpha-formyl steroid + oxidized [NADPH--hemoprotein reductase] + 2 H2O + H(+). The catalysed reaction is a 14alpha-formyl steroid + reduced [NADPH--hemoprotein reductase] + O2 = a Delta(14) steroid + formate + oxidized [NADPH--hemoprotein reductase] + H2O + 2 H(+). The enzyme catalyses lanosterol + 3 reduced [NADPH--hemoprotein reductase] + 3 O2 = 4,4-dimethyl-5alpha-cholesta-8,14,24-trien-3beta-ol + formate + 3 oxidized [NADPH--hemoprotein reductase] + 4 H2O + 4 H(+). It carries out the reaction lanosterol + reduced [NADPH--hemoprotein reductase] + O2 = 32-hydroxylanosterol + oxidized [NADPH--hemoprotein reductase] + H2O + H(+). It catalyses the reaction 32-hydroxylanosterol + reduced [NADPH--hemoprotein reductase] + O2 = 32-oxolanosterol + oxidized [NADPH--hemoprotein reductase] + 2 H2O + H(+). The catalysed reaction is 32-oxolanosterol + reduced [NADPH--hemoprotein reductase] + O2 = 4,4-dimethyl-5alpha-cholesta-8,14,24-trien-3beta-ol + formate + oxidized [NADPH--hemoprotein reductase] + H2O + 2 H(+). The enzyme catalyses eburicol + 3 reduced [NADPH--hemoprotein reductase] + 3 O2 = 14-demethyleburicol + formate + 3 oxidized [NADPH--hemoprotein reductase] + 4 H2O + 4 H(+). It carries out the reaction eburicol + reduced [NADPH--hemoprotein reductase] + O2 = 32-hydroxyeburicol + oxidized [NADPH--hemoprotein reductase] + H2O + H(+). It catalyses the reaction 32-hydroxyeburicol + reduced [NADPH--hemoprotein reductase] + O2 = 32-oxoeburicol + oxidized [NADPH--hemoprotein reductase] + 2 H2O + H(+). The catalysed reaction is 32-oxoeburicol + reduced [NADPH--hemoprotein reductase] + O2 = 14-demethyleburicol + formate + oxidized [NADPH--hemoprotein reductase] + H2O + 2 H(+). Its pathway is steroid biosynthesis; zymosterol biosynthesis; zymosterol from lanosterol: step 1/6. In terms of biological role, sterol 14alpha-demethylase that plays a critical role in the third module of ergosterol biosynthesis pathway, being ergosterol the major sterol component in fungal membranes that participates in a variety of functions. The third module or late pathway involves the ergosterol synthesis itself through consecutive reactions that mainly occur in the endoplasmic reticulum (ER) membrane. In filamentous fungi, during the initial step of this module, lanosterol (lanosta-8,24-dien-3beta-ol) can be metabolized to eburicol. Sterol 14alpha-demethylase catalyzes the three-step oxidative removal of the 14alpha-methyl group (C-32) of both these sterols in the form of formate, and converts eburicol and lanosterol to 14-demethyleburicol (4,4,24-trimethylergosta-8,14,24(28)-trienol) and 4,4-dimethyl-5alpha-cholesta-8,14,24-trien-3beta-ol, respectively, which are further metabolized by other enzymes in the pathway to ergosterol. Can also use substrates not intrinsic to fungi, such as 24,25-dihydrolanosterol (DHL), producing 4,4-dimethyl-8,14-cholestadien-3-beta-ol, but at lower rates than the endogenous substrates. This chain is Lanosterol 14-alpha demethylase (ERG11), found in Candida tropicalis (Yeast).